A 282-amino-acid polypeptide reads, in one-letter code: 4-diphosphocytidyl-2-C-methyl-D-erythritol kinase (282 aa).

Residue Lys-12 is part of the active site. 95-105 (PMGGGIGGGSS) provides a ligand contact to ATP. Asp-137 is an active-site residue.

Belongs to the GHMP kinase family. IspE subfamily.

The catalysed reaction is 4-CDP-2-C-methyl-D-erythritol + ATP = 4-CDP-2-C-methyl-D-erythritol 2-phosphate + ADP + H(+). The protein operates within isoprenoid biosynthesis; isopentenyl diphosphate biosynthesis via DXP pathway; isopentenyl diphosphate from 1-deoxy-D-xylulose 5-phosphate: step 3/6. Its function is as follows. Catalyzes the phosphorylation of the position 2 hydroxy group of 4-diphosphocytidyl-2C-methyl-D-erythritol. This is 4-diphosphocytidyl-2-C-methyl-D-erythritol kinase from Pseudomonas paraeruginosa (strain DSM 24068 / PA7) (Pseudomonas aeruginosa (strain PA7)).